We begin with the raw amino-acid sequence, 374 residues long: Protein TAB2 homolog, chloroplastic (374 aa).

A chloroplast-targeting transit peptide spans 1 to 64; sequence MATLGFNTRR…SLSITKEQEV (64 aa). The segment at 58 to 84 is disordered; that stretch reads ITKEQEVANEVEEDDPTSELSYLDPES. Residues 64-74 are compositionally biased toward acidic residues; the sequence is VANEVEEDDPT.

It is found in the plastid. Its subcellular location is the chloroplast. Nuclear genome-encoded A/U-rich RNA-binding protein involved in the biogenesis of photosystem I (PSI) and II (PSII). Required for the light-controlled accumulation of PSI and PSII during early plant development. Does not seem to be required for the translation of mRNAs of the PSI subunits. This is Protein TAB2 homolog, chloroplastic from Arabidopsis thaliana (Mouse-ear cress).